Consider the following 273-residue polypeptide: Protein FAM210A (273 aa).

Residues 94-116 (RVLSSSSTSQETPSEKKEETDPL) are disordered. Positions 106-116 (PSEKKEETDPL) are enriched in basic and acidic residues. The DUF1279 domain occupies 118 to 230 (DKSISLYQRF…GYMSTPPPVK (113 aa)). Residues 138–158 (LIPVHLITSGIWFGTFYYATI) form a helical membrane-spanning segment. Positions 233–269 (LQGRMEETKELITEKMEETKDRLTEKLQETKGKVSFK) form a coiled coil.

This sequence belongs to the FAM210 family. As to quaternary structure, interacts with ATAD3A. Expressed in skeletal muscle, heart, brain but not in bone.

It localises to the membrane. It is found in the mitochondrion. Its subcellular location is the cytoplasm. Its function is as follows. May play a role in the structure and strength of both muscle and bone. The polypeptide is Protein FAM210A (Fam210a) (Mus musculus (Mouse)).